The chain runs to 527 residues: Lysine--tRNA ligase (527 aa).

Glutamate 431 and glutamate 438 together coordinate Mg(2+).

Belongs to the class-II aminoacyl-tRNA synthetase family. In terms of assembly, homodimer. Mg(2+) is required as a cofactor.

The protein localises to the cytoplasm. The enzyme catalyses tRNA(Lys) + L-lysine + ATP = L-lysyl-tRNA(Lys) + AMP + diphosphate. The protein is Lysine--tRNA ligase (lysS) of Chlamydia pneumoniae (Chlamydophila pneumoniae).